We begin with the raw amino-acid sequence, 954 residues long: Calsyntenin-1 (954 aa).

An N-terminal signal peptide occupies residues 1-25 (MRIRGVKPFASAVGLLLGLLYAVDA). Residues 26–833 (AKVNKHKPWI…THQASVVPSA (808 aa)) lie on the Extracellular side of the membrane. 2 Cadherin domains span residues 35–151 (IETT…SPVF) and 152–252 (KEKS…KPSW). N-linked (GlcNAc...) asparagine glycans are attached at residues Asn333, Asn353, and Asn552. Residues 834 to 854 (ATIVIVVCVSFLVFMIILGVF) form a helical membrane-spanning segment. Topologically, residues 855–954 (RIRAAHQRTM…LEWDDSTLTY (100 aa)) are cytoplasmic. Positions 891–954 (TYEDQHSSEE…LEWDDSTLTY (64 aa)) are disordered. Acidic residues predominate over residues 900-935 (EEGDEEEEESEDGEEEDDITSAESDSSEDEAGEQED).

Belongs to the calsyntenin family. In terms of assembly, homooligomer and heterooligomer; mediates both homophilic and heterophilc interactions with clstn2 and clstn3 paralogs via cadherin domains. By 48 hours post-fertilization (hpf), widely expressed in the brain, with strong expression in the telencephalon and the midbrain.

The protein localises to the postsynaptic cell membrane. It is found in the endoplasmic reticulum membrane. It localises to the golgi apparatus membrane. Its subcellular location is the cell projection. The protein resides in the neuron projection. Functionally, postsynaptic adhesion molecule involved in vesicle trafficking; required for branching of peripheral but not central axons of sensory neurons. Promotes synapse development by acting as a cell adhesion molecule at the postsynaptic membrane, which associates with presynaptic neurexins. This is Calsyntenin-1 from Danio rerio (Zebrafish).